Here is a 271-residue protein sequence, read N- to C-terminus: Intercellular adhesion molecule 4 (271 aa).

The signal sequence occupies residues 1-22 (MGSLFPLSLLFFLAAAYPGVGS). Residues 23–240 (ALGRRTKRAQ…MLAWSPAPTA (218 aa)) lie on the Extracellular side of the membrane. Ig-like C2-type domains lie at 62 to 124 (GKSV…TRWA) and 146 to 217 (GRKY…LNLD). N-linked (GlcNAc...) asparagine glycosylation is found at asparagine 68, asparagine 78, asparagine 190, and asparagine 223. Disulfide bonds link cysteine 69–cysteine 113, cysteine 69–cysteine 117, cysteine 73–cysteine 117, and cysteine 153–cysteine 210. Residues 241 to 261 (LASGSIAALVGILLTVGAAYL) form a helical membrane-spanning segment. The Cytoplasmic segment spans residues 262–271 (CKCLAMKSQA).

The protein belongs to the immunoglobulin superfamily. ICAM family. Post-translationally, N- and O-glycosylated. Erythrocytes.

The protein localises to the cell membrane. The protein resides in the secreted. Its function is as follows. ICAM proteins are ligands for the leukocyte adhesion protein LFA-1 (integrin alpha-L/beta-2). ICAM4 is also a ligand for alpha-4/beta-1 and alpha-V integrins. This Homo sapiens (Human) protein is Intercellular adhesion molecule 4 (ICAM4).